The sequence spans 339 residues: tRNA N6-adenosine threonylcarbamoyltransferase (339 aa).

The Fe cation site is built by H111 and H115. Residues 134–138 (LVSGG), D167, G180, and N274 each bind substrate. A Fe cation-binding site is contributed by D302.

The protein belongs to the KAE1 / TsaD family. Requires Fe(2+) as cofactor.

The protein resides in the cytoplasm. The enzyme catalyses L-threonylcarbamoyladenylate + adenosine(37) in tRNA = N(6)-L-threonylcarbamoyladenosine(37) in tRNA + AMP + H(+). Required for the formation of a threonylcarbamoyl group on adenosine at position 37 (t(6)A37) in tRNAs that read codons beginning with adenine. Is involved in the transfer of the threonylcarbamoyl moiety of threonylcarbamoyl-AMP (TC-AMP) to the N6 group of A37, together with TsaE and TsaB. TsaD likely plays a direct catalytic role in this reaction. This chain is tRNA N6-adenosine threonylcarbamoyltransferase, found in Methylobacillus flagellatus (strain ATCC 51484 / DSM 6875 / VKM B-1610 / KT).